The sequence spans 456 residues: Keratin, type I cuticular Ha8 (456 aa).

Residues M1–E104 form a head region. An IF rod domain is found at E104–L415. The interval K105–R139 is coil 1A. The interval S140–D150 is linker 1. Residues Y151–S251 form a coil 1B region. The segment at Q252–I267 is linker 12. Positions D268–E411 are coil 2. A tail region spans residues D412–F456.

It belongs to the intermediate filament family.

This chain is Keratin, type I cuticular Ha8 (KRT38), found in Homo sapiens (Human).